The primary structure comprises 679 residues: Acetyl-coenzyme A synthetase 2 (679 aa).

The disordered stretch occupies residues 1-32 (MTSSPTHQVVHEANNIKKQETPKEFFERQPRQ). The span at 14 to 30 (NNIKKQETPKEFFERQP) shows a compositional bias: basic and acidic residues. Residues 207-210 (RGGK) and T326 each bind CoA. Residues 402-404 (GEP), 426-431 (DTYWQT), D517, and R532 each bind ATP. Position 540 (S540) interacts with CoA. R543 is a binding site for ATP. Residue R611 coordinates CoA.

The protein belongs to the ATP-dependent AMP-binding enzyme family.

It catalyses the reaction acetate + ATP + CoA = acetyl-CoA + AMP + diphosphate. This is Acetyl-coenzyme A synthetase 2 (ACS2) from Debaryomyces hansenii (strain ATCC 36239 / CBS 767 / BCRC 21394 / JCM 1990 / NBRC 0083 / IGC 2968) (Yeast).